Consider the following 551-residue polypeptide: Glucans biosynthesis protein D (551 aa).

Positions 1 to 32 (MNRRRFIKGSMAMAAVCGSSGIASLFSQAAFA) form a signal peptide, tat-type signal.

The protein belongs to the OpgD/OpgG family. Predicted to be exported by the Tat system. The position of the signal peptide cleavage has not been experimentally proven.

It is found in the periplasm. It functions in the pathway glycan metabolism; osmoregulated periplasmic glucan (OPG) biosynthesis. Functionally, probably involved in the control of the structural glucose backbone of osmoregulated periplasmic glucans (OPGs). This chain is Glucans biosynthesis protein D, found in Salmonella enteritidis PT4 (strain P125109).